A 587-amino-acid polypeptide reads, in one-letter code: 5-aminolevulinate synthase, erythroid-specific, mitochondrial (587 aa).

Residues Met-1 to Ser-49 constitute a mitochondrion transit peptide. Arg-163 lines the succinyl-CoA pocket. 2 residues coordinate pyridoxal 5'-phosphate: Cys-258 and Phe-259. Succinyl-CoA contacts are provided by Ser-280 and Lys-299. Pyridoxal 5'-phosphate-binding residues include Ser-332, His-360, and Thr-388. The active site involves Lys-391. Residue Lys-391 is modified to N6-(pyridoxal phosphate)lysine. Pyridoxal 5'-phosphate contacts are provided by Thr-420 and Thr-421. Thr-508 provides a ligand contact to succinyl-CoA.

This sequence belongs to the class-II pyridoxal-phosphate-dependent aminotransferase family. As to quaternary structure, homodimer. Interacts with SUCLA2. Requires pyridoxal 5'-phosphate as cofactor.

The protein localises to the mitochondrion inner membrane. It catalyses the reaction succinyl-CoA + glycine + H(+) = 5-aminolevulinate + CO2 + CoA. The protein operates within porphyrin-containing compound metabolism; protoporphyrin-IX biosynthesis; 5-aminolevulinate from glycine: step 1/1. In terms of biological role, catalyzes the pyridoxal 5'-phosphate (PLP)-dependent condensation of succinyl-CoA and glycine to form aminolevulinic acid (ALA), with CoA and CO2 as by-products. Contributes significantly to heme formation during erythropoiesis. This chain is 5-aminolevulinate synthase, erythroid-specific, mitochondrial (ALAS2), found in Bos taurus (Bovine).